We begin with the raw amino-acid sequence, 403 residues long: D-mannonate dehydratase Caul1427 (403 aa).

Substrate is bound by residues asparagine 38 and histidine 123. Residue tyrosine 160 is the Proton donor/acceptor of the active site. A Mg(2+)-binding site is contributed by aspartate 211. Residue histidine 213 is the Proton donor/acceptor of the active site. Residues glutamate 237 and glutamate 263 each contribute to the Mg(2+) site. 5 residues coordinate substrate: glutamate 263, arginine 284, histidine 313, aspartate 317, and glutamate 340.

This sequence belongs to the mandelate racemase/muconate lactonizing enzyme family. GalD subfamily. It depends on Mg(2+) as a cofactor.

It carries out the reaction D-mannonate = 2-dehydro-3-deoxy-D-gluconate + H2O. It participates in carbohydrate metabolism; pentose and glucuronate interconversion. Functionally, catalyzes the dehydration of D-mannonate. Has no detectable activity with a panel of 70 other acid sugars (in vitro). This Caulobacter sp. (strain K31) protein is D-mannonate dehydratase Caul1427.